Here is a 356-residue protein sequence, read N- to C-terminus: Putative methylthioribose-1-phosphate isomerase (356 aa).

Substrate is bound by residues 57–59 (RGA), Arg100, and Gln206. Residue Asp247 is the Proton donor of the active site. 257-258 (NK) is a substrate binding site.

The protein belongs to the eIF-2B alpha/beta/delta subunits family. MtnA subfamily.

It catalyses the reaction 5-(methylsulfanyl)-alpha-D-ribose 1-phosphate = 5-(methylsulfanyl)-D-ribulose 1-phosphate. In terms of biological role, catalyzes the interconversion of methylthioribose-1-phosphate (MTR-1-P) into methylthioribulose-1-phosphate (MTRu-1-P). The chain is Putative methylthioribose-1-phosphate isomerase from Pyrococcus furiosus (strain ATCC 43587 / DSM 3638 / JCM 8422 / Vc1).